Here is a 311-residue protein sequence, read N- to C-terminus: Taste receptor type 2 member 9 (311 aa).

At 1–9 (MPSTIEAIY) the chain is on the extracellular side. Residues 10–32 (IILIAGELTIGIWGNGFIVLVNC) traverse the membrane as a helical segment. Topologically, residues 33-52 (IDWLKRRDVSLIDIILISLA) are cytoplasmic. The helical transmembrane segment at 53–72 (ISRICLLCVISLDGFFILLF) threads the bilayer. The Extracellular portion of the chain corresponds to 73-86 (PGTYDINVLESIMD). The helical transmembrane segment at 87–109 (AVWTFANNSSLWFTSCLSIFYLL) threads the bilayer. The Cytoplasmic segment spans residues 110-128 (KIANISHPFFFWLKLKINK). A helical transmembrane segment spans residues 129–146 (VILAILLGSFLISLIISF). Over 147 to 179 (PINGXWYHLFKVSHEENITWAFKVSTIPGAFKQ) the chain is Extracellular. A glycan (N-linked (GlcNAc...) asparagine) is linked at Asn-163. Residues 180–202 (LTLNLGAMVPFMLCLISFFLLLF) traverse the membrane as a helical segment. The Cytoplasmic segment spans residues 203 to 233 (SLVRHTKQIQLHATGLRDPSTEAHMRAIKAV). A helical membrane pass occupies residues 234-256 (IIFLLLLIVYYPVFLVMTSSTLI). Topologically, residues 257 to 260 (PQGK) are extracellular. The helical transmembrane segment at 261–283 (LVLMIGDIVTVIFPSSHSFILIM) threads the bilayer. Residues 284 to 311 (GNSKLREAFLKMLRFVKGFLRRRKPFGP) are Cytoplasmic-facing.

This sequence belongs to the G-protein coupled receptor T2R family.

The protein resides in the membrane. Its function is as follows. Gustducin-coupled receptor implicated in the perception of bitter compounds in the oral cavity and the gastrointestinal tract. Signals through PLCB2 and the calcium-regulated cation channel TRPM5. The sequence is that of Taste receptor type 2 member 9 (TAS2R9) from Papio hamadryas (Hamadryas baboon).